A 171-amino-acid chain; its full sequence is 3-hydroxydecanoyl-[acyl-carrier-protein] dehydratase (171 aa).

His-70 is an active-site residue.

This sequence belongs to the thioester dehydratase family. FabA subfamily. As to quaternary structure, homodimer.

It localises to the cytoplasm. It catalyses the reaction a (3R)-hydroxyacyl-[ACP] = a (2E)-enoyl-[ACP] + H2O. The catalysed reaction is (3R)-hydroxydecanoyl-[ACP] = (2E)-decenoyl-[ACP] + H2O. It carries out the reaction (2E)-decenoyl-[ACP] = (3Z)-decenoyl-[ACP]. The protein operates within lipid metabolism; fatty acid biosynthesis. Functionally, necessary for the introduction of cis unsaturation into fatty acids. Catalyzes the dehydration of (3R)-3-hydroxydecanoyl-ACP to E-(2)-decenoyl-ACP and then its isomerization to Z-(3)-decenoyl-ACP. Can catalyze the dehydratase reaction for beta-hydroxyacyl-ACPs with saturated chain lengths up to 16:0, being most active on intermediate chain length. In Shewanella sp. (strain MR-4), this protein is 3-hydroxydecanoyl-[acyl-carrier-protein] dehydratase.